Reading from the N-terminus, the 1319-residue chain is MSKERPKRNIIQKKYDDNDGMPWSEERVVRKVLYLSLKEFKSAQKRQLCDGIDDEGKGPNASLSNGQLNGSKGGHKEDGSRSQRKDGGGEYSVDGPAKKRPRLHAQRKFAQSQPNSPSNTPVKMADPSLPTPLTHITFLSRRKPKTEDFLTFICLRGSPALPSNMAYFGCSQDEEDLEDEDEIEEEKAPSVASTSCQSTPKKGKPHGKINGLVLNGHKVHKDKELTPRSKARESSVGRDRSERCDESEISHKHTAATAKSHNTNGHNYRRAAEELRKQVSKVNGLTRASSVGTHKASGKKQKDFRLPSKTVKYTATVSKGHVTYTKAKRELVKKAKLNHSKHGASAGLRAYSNNHHHNSHHATSNGHGRPQLSHSGKAQSINAKTRKQVLLSNGVHKMTNGSRLNGRLNGRHSAREEEVVDRPVRQGLRNSKRRSDAMTLLGAVTESEETKTKQQTTEVKKAKVQPSPLETRSKKALNQFKSPNIVTIAHSITEMAASPIQKTGPAPPPSPPAAPASPSMPQNPAIPEPARQRPKRASAGKLMFIRKAQQRAQTNPTLNRTTSTTSASKSFKPAEPTHTPPPRLDRDRERERERERSRARYAALGDVPIFKPSSREFQDPLVYLDSFREQVESCGLCRVLPPTDWRPECKLNDEMRFVTQVQRIHKLGRRWGPNVQKLACIKKHLKSQGISMDQPPVIGKSFKSSAFRSAFVCIGGCEVDLARFSELVCDLGGMQQVMDLKKWSRLADLLRIPKSAQDRLAKLQEAYLQFLLSYDLLSPEELQRLEQEVRAEKEALERKRGPLEGHSDNGHHSLALPRYEPKNGLNGLSHRNGFRNHHKEPDIQRQAGRRRLFAQEKKGEKVECEETEEEMEDEGVLSDQHKCIYKGRSVSLTTFYRIARNTMMMYFNKEPGAAEVEQDYWRIVEQRDCHVAVHYGKVDTNTHGSGFPVGKSEPFSKHGWNLTVLPNNSGSILRHLGAVPGVTIPWLNIGMVFSTSCWSQDQNRLPYIDYLHTGADCIWYSIPAEEKTKLDKVVHTLLQANGTPGLEMLEKNVMISPEVLCREGIKVHRTVQQSGQFVVVFPGAFVSRVCCGYSVSETVHFATPQWMNLGYEAAKDLKCRRIAKPFSMEKLLYQIATAEAKRENRLVLSTISSLLKDLRNIEMKQRQELYEAGLLSSARYCTHDHNQSPADTRKKPRKWLALESSERRCQMCQHLCYLSMVVQENENVVFCLECALHYVEKHKNCRGLKMMYRYDEEQINSLVNQVCGKALVRSGSEVCNGSSPIKPPAKRGPRKRESMKITLIPLPTHPSKSAAAAVS.

Residues 1–11 are compositionally biased toward basic residues; sequence MSKERPKRNII. Disordered stretches follow at residues 1 to 23, 50 to 130, 173 to 265, 351 to 382, 396 to 478, 499 to 537, and 549 to 599; these read MSKE…GMPW, DGID…PSLP, DEED…NTNG, YSNN…QSIN, HKMT…KALN, PIQK…PKRA, and QQRA…RSRA. Over residues 61–70 the composition is skewed to polar residues; the sequence is ASLSNGQLNG. Basic and acidic residues predominate over residues 74-88; that stretch reads GHKEDGSRSQRKDGG. The Nuclear localization signal signature appears at 96-102; that stretch reads PAKKRPR. The span at 98 to 107 shows a compositional bias: basic residues; it reads KKRPRLHAQR. Positions 109-121 are enriched in polar residues; that stretch reads FAQSQPNSPSNTP. Residues 173–185 show a composition bias toward acidic residues; the sequence is DEEDLEDEDEIEE. The segment covering 191–200 has biased composition (polar residues); the sequence is VASTSCQSTP. Over residues 221–251 the composition is skewed to basic and acidic residues; that stretch reads KDKELTPRSKARESSVGRDRSERCDESEISH. A compositionally biased stretch (polar residues) spans 372 to 382; it reads LSHSGKAQSIN. The segment covering 413 to 424 has biased composition (basic and acidic residues); the sequence is SAREEEVVDRPV. Residues 505-515 show a composition bias toward pro residues; that stretch reads PAPPPSPPAAP. 2 stretches are compositionally biased toward low complexity: residues 516–525 and 554–570; these read ASPSMPQNPA and TNPT…ASKS. A compositionally biased stretch (basic and acidic residues) spans 583–598; the sequence is RLDRDRERERERERSR. The 42-residue stretch at 607–648 folds into the JmjN domain; sequence VPIFKPSSREFQDPLVYLDSFREQVESCGLCRVLPPTDWRPE. The ARID domain occupies 671–779; sequence WGPNVQKLAC…FLLSYDLLSP (109 aa). Residues 798 to 811 are compositionally biased toward basic and acidic residues; that stretch reads RKRGPLEGHSDNGH. The disordered stretch occupies residues 798–818; it reads RKRGPLEGHSDNGHHSLALPR. The short motif at 944 to 948 is the GSGFP motif element; sequence GSGFP. Residues 954 to 1118 form the JmjC domain; that stretch reads PFSKHGWNLT…LGYEAAKDLK (165 aa).

The protein belongs to the JARID2 family. Associates with the PRC2 complex.

It is found in the nucleus. Functionally, regulator of histone methyltransferase complexes that plays an essential role in embryonic development. Acts by modulating histone methyltransferase activity and promoting the recruitment of histone methyltransferase complexes to their target genes. Binds DNA and mediates the recruitment of the PRC2 complex to target genes in embryonic stem cells. Does not have histone demethylase activity but regulates activity of various histone methyltransferase complexes. In embryonic stem cells, it associates with the PRC2 complex and inhibits trimethylation of 'Lys-27' of histone H3 (H3K27me3) by the PRC2 complex, thereby playing a key role in differentiation of embryonic stem cells and normal development. This chain is Protein Jumonji (jarid2b), found in Danio rerio (Zebrafish).